The sequence spans 253 residues: Ciliary microtubule associated protein 1B (253 aa).

Residues 182–207 (PGPCAYQVVSPGVYKSRAPQFTILAR) form an STPGR repeat.

Belongs to the CIMAP family.

The protein resides in the cell projection. It is found in the cilium. The protein localises to the flagellum. The chain is Ciliary microtubule associated protein 1B from Homo sapiens (Human).